A 232-amino-acid polypeptide reads, in one-letter code: Endonuclease NucS (232 aa).

This sequence belongs to the NucS endonuclease family.

Its subcellular location is the cytoplasm. Cleaves both 3' and 5' ssDNA extremities of branched DNA structures. This chain is Endonuclease NucS, found in Mycobacteroides abscessus (strain ATCC 19977 / DSM 44196 / CCUG 20993 / CIP 104536 / JCM 13569 / NCTC 13031 / TMC 1543 / L948) (Mycobacterium abscessus).